The sequence spans 487 residues: Ribulose bisphosphate carboxylase large chain (487 aa).

Residues asparagine 127 and threonine 177 each contribute to the substrate site. Lysine 179 serves as the catalytic Proton acceptor. Lysine 181 serves as a coordination point for substrate. Residues lysine 205, aspartate 207, and glutamate 208 each coordinate Mg(2+). Lysine 205 is modified (N6-carboxylysine). Histidine 297 serves as the catalytic Proton acceptor. The substrate site is built by arginine 298, histidine 330, and serine 382.

This sequence belongs to the RuBisCO large chain family. Type I subfamily. In terms of assembly, heterohexadecamer of 8 large chains and 8 small chains. Mg(2+) serves as cofactor.

It catalyses the reaction 2 (2R)-3-phosphoglycerate + 2 H(+) = D-ribulose 1,5-bisphosphate + CO2 + H2O. The catalysed reaction is D-ribulose 1,5-bisphosphate + O2 = 2-phosphoglycolate + (2R)-3-phosphoglycerate + 2 H(+). RuBisCO catalyzes two reactions: the carboxylation of D-ribulose 1,5-bisphosphate, the primary event in carbon dioxide fixation, as well as the oxidative fragmentation of the pentose substrate. Both reactions occur simultaneously and in competition at the same active site. The protein is Ribulose bisphosphate carboxylase large chain of Paracoccus denitrificans (strain Pd 1222).